Consider the following 479-residue polypeptide: UDP-N-acetylmuramate--L-alanine ligase (479 aa).

126-132 (GTHGKTT) provides a ligand contact to ATP.

It belongs to the MurCDEF family.

It is found in the cytoplasm. It carries out the reaction UDP-N-acetyl-alpha-D-muramate + L-alanine + ATP = UDP-N-acetyl-alpha-D-muramoyl-L-alanine + ADP + phosphate + H(+). The protein operates within cell wall biogenesis; peptidoglycan biosynthesis. In terms of biological role, cell wall formation. This Alkalilimnicola ehrlichii (strain ATCC BAA-1101 / DSM 17681 / MLHE-1) protein is UDP-N-acetylmuramate--L-alanine ligase.